The sequence spans 519 residues: MAKITRALISVSDKTGIVELSKALAGYGVEILSTGGTAKLLRESGLTVKDVSEFTGFPEMLDGRVKTLHPKVHGGLLGIRANAEHQAKMKEHGIEPIDMVVVNLYPFEATVAKPDCTLEDAIENIDIGGPTMLRSAAKNNHDVTVLVDAADYAAVLEEMAANGGAVSAKTNFRLAVKVYQHTAAYDGAISNWLGARLGENTDEYPETFTIQVKKAQDLRYGENPHQSAAFYVERGITEPCVSNAVQLQGKELSFNNIIDLDAAIETVKEFTDKPAAVIIKHTNPCGVALGDSPISAYLKARECDPVSAFGGIVGFNRIVDAAAARELTSTFLEAVIAPGYDEEALAIFTAKKNVRVMQVPLLAGHLQTGYDLKRVVGGLLLQGRDLGMVAATDCKVMSERQPTAQELAALDFAWRVCKHVKSNAIVFTNADQTVGIGAGQMSRVDSSKIAVQKALLPIKGTVLASDAFFPFRDGVDAAAEAGVTAIIQPGGSVRDEEVIQAANEHGMAMVFTNMRHFRH.

One can recognise an MGS-like domain in the interval 1 to 147 (MAKITRALIS…KNNHDVTVLV (147 aa)).

It belongs to the PurH family.

The catalysed reaction is (6R)-10-formyltetrahydrofolate + 5-amino-1-(5-phospho-beta-D-ribosyl)imidazole-4-carboxamide = 5-formamido-1-(5-phospho-D-ribosyl)imidazole-4-carboxamide + (6S)-5,6,7,8-tetrahydrofolate. It catalyses the reaction IMP + H2O = 5-formamido-1-(5-phospho-D-ribosyl)imidazole-4-carboxamide. Its pathway is purine metabolism; IMP biosynthesis via de novo pathway; 5-formamido-1-(5-phospho-D-ribosyl)imidazole-4-carboxamide from 5-amino-1-(5-phospho-D-ribosyl)imidazole-4-carboxamide (10-formyl THF route): step 1/1. It functions in the pathway purine metabolism; IMP biosynthesis via de novo pathway; IMP from 5-formamido-1-(5-phospho-D-ribosyl)imidazole-4-carboxamide: step 1/1. This is Bifunctional purine biosynthesis protein PurH from Trichlorobacter lovleyi (strain ATCC BAA-1151 / DSM 17278 / SZ) (Geobacter lovleyi).